Consider the following 218-residue polypeptide: Serine/threonine-protein phosphatase 2 (218 aa).

Mn(2+) is bound by residues Asp-22, His-24, Asp-51, and Asn-77. His-78 acts as the Proton donor in catalysis. Residue His-187 coordinates Mn(2+).

This sequence belongs to the PPP phosphatase family. Mn(2+) is required as a cofactor.

It carries out the reaction O-phospho-L-seryl-[protein] + H2O = L-seryl-[protein] + phosphate. It catalyses the reaction O-phospho-L-threonyl-[protein] + H2O = L-threonyl-[protein] + phosphate. Functionally, has been shown, in vitro, to act on Ser, Thr and Tyr-phosphorylated substrates. This Escherichia coli (strain K12) protein is Serine/threonine-protein phosphatase 2 (pphB).